Here is a 103-residue protein sequence, read N- to C-terminus: Large ribosomal subunit protein uL23 (103 aa).

Belongs to the universal ribosomal protein uL23 family. In terms of assembly, part of the 50S ribosomal subunit. Contacts protein L29, and trigger factor when it is bound to the ribosome.

One of the early assembly proteins it binds 23S rRNA. One of the proteins that surrounds the polypeptide exit tunnel on the outside of the ribosome. Forms the main docking site for trigger factor binding to the ribosome. This chain is Large ribosomal subunit protein uL23, found in Aquifex aeolicus (strain VF5).